We begin with the raw amino-acid sequence, 414 residues long: uncharacterized protein (414 aa).

Positions 246–360 (EAPNITKLAG…LNKRVEEIRR (115 aa)) constitute a Nop domain. The tract at residues 358–414 (IRRKYPKPPKKKKKEKPKAKKKEKKGKKEKSKKKKDKKKDKKGKKERKVIGKTKSRK) is disordered. Over residues 361-414 (KYPKPPKKKKKEKPKAKKKEKKGKKEKSKKKKDKKKDKKGKKERKVIGKTKSRK) the composition is skewed to basic residues.

The protein belongs to the NOP5/NOP56 family.

This is an uncharacterized protein from Methanocaldococcus jannaschii (strain ATCC 43067 / DSM 2661 / JAL-1 / JCM 10045 / NBRC 100440) (Methanococcus jannaschii).